The primary structure comprises 252 residues: uncharacterized protein (252 aa).

Belongs to the methyltransferase superfamily.

This is an uncharacterized protein from Mycobacterium sp. (strain JLS).